The chain runs to 250 residues: Kv channel-interacting protein 4 (250 aa).

The KIS stretch occupies residues asparagine 2–serine 44. A phosphoserine mark is found at serine 17 and serine 56. Residues leucine 61–proline 117 enclose the EF-hand 1; degenerate domain. EF-hand domains follow at residues aspartate 120–glycine 155, threonine 156–methionine 191, and alanine 204–isoleucine 239. Positions 133, 135, 137, 144, 169, 171, 173, 175, 180, 217, 219, 221, and 228 each coordinate Ca(2+). Residues glutamate 237–isoleucine 250 form an interaction with KCND2 region.

It belongs to the recoverin family. Component of heteromultimeric potassium channels. Identified in potassium channel complexes containing KCND1, KCND2, KCND3, KCNIP1, KCNIP2, KCNIP3, KCNIP4, DPP6 and DPP10. Interacts with KCND2. Interacts with KCND3. Interacts with the C-terminus of PSEN2 and probably PSEN1.

The protein resides in the cell membrane. It is found in the cytoplasm. Its subcellular location is the peroxisome. Its function is as follows. Regulatory subunit of Kv4/D (Shal)-type voltage-gated rapidly inactivating A-type potassium channels. Modulates KCND2 channel density, inactivation kinetics and rate of recovery from inactivation in a calcium-dependent and isoform-specific manner. Modulates KCND3/Kv4.3 currents. Isoform 4 does not increase KCND2 expression at the cell membrane. Isoform 4 retains KCND3 in the endoplasmic reticulum and negatively regulates its expression at the cell membrane. The polypeptide is Kv channel-interacting protein 4 (KCNIP4) (Bos taurus (Bovine)).